Consider the following 289-residue polypeptide: Eukaryotic translation initiation factor 3 subunit F (289 aa).

The MPN domain maps to 7–137 (VKVHPVVLFQ…LRAYVCVPLG (131 aa)).

Belongs to the eIF-3 subunit F family. As to quaternary structure, component of the eukaryotic translation initiation factor 3 (eIF-3) complex.

The protein resides in the cytoplasm. Its function is as follows. Component of the eukaryotic translation initiation factor 3 (eIF-3) complex, which is involved in protein synthesis of a specialized repertoire of mRNAs and, together with other initiation factors, stimulates binding of mRNA and methionyl-tRNAi to the 40S ribosome. The eIF-3 complex specifically targets and initiates translation of a subset of mRNAs involved in cell proliferation. The chain is Eukaryotic translation initiation factor 3 subunit F from Bombyx mori (Silk moth).